A 774-amino-acid polypeptide reads, in one-letter code: Pentatricopeptide repeat-containing protein At4g20770 (774 aa).

20 PPR repeats span residues 5–39 (GNKY…GMKS), 40–70 (DTYL…MSVR), 71–101 (DVYS…MPER), 102–136 (DVVS…GFLP), 137–171 (SRFT…GLDK), 172–203 (NIFV…LSQP), 204–238 (NEVS…GVQV), 239–270 (DSVC…LGKQ), 283–313 (DLHL…MPEV), 314–348 (NVVS…GFQP), 349–379 (NEVT…IPQP), 380–414 (SVSA…NLKP), 415–449 (DKTT…EISK), 450–480 (NSHI…CINE), 482–516 (DIAC…AVLC), 518–552 (NETS…GYVS), 553–583 (DSFV…VLRK), 584–618 (NTVI…GEKP), 619–654 (DGIT…GIEP), and 655–685 (ELDH…TPYK). The segment at 690–765 (LWEILLSSCR…TPGQSWTTYG (76 aa)) is type E motif.

It belongs to the PPR family. PCMP-E subfamily.

This is Pentatricopeptide repeat-containing protein At4g20770 (PCMP-E35) from Arabidopsis thaliana (Mouse-ear cress).